Consider the following 547-residue polypeptide: Probable pectinesterase/pectinesterase inhibitor 12 (547 aa).

A signal peptide spans 1–23 (MALSSFNLSSLLFLLFFTPSVFS). Residues 31-185 (NPHETSATSF…YKHISNSLSA (155 aa)) are pectinesterase inhibitor 12. Asparagine 131, asparagine 247, asparagine 260, and asparagine 303 each carry an N-linked (GlcNAc...) asparagine glycan. Residues 237 to 533 (SLVVAADGTG…FTATEFITGD (297 aa)) are pectinesterase 12. The substrate site is built by threonine 312 and glutamine 342. Aspartate 365 acts as the Proton donor; for pectinesterase activity in catalysis. Cysteine 379 and cysteine 399 are joined by a disulfide. Aspartate 386 serves as the catalytic Nucleophile; for pectinesterase activity. 2 N-linked (GlcNAc...) asparagine glycosylation sites follow: asparagine 432 and asparagine 443. Residues arginine 454 and tryptophan 456 each contribute to the substrate site. Asparagine 523 carries N-linked (GlcNAc...) asparagine glycosylation.

In the N-terminal section; belongs to the PMEI family. It in the C-terminal section; belongs to the pectinesterase family. In terms of tissue distribution, expressed in siliques.

Its subcellular location is the secreted. The protein resides in the cell wall. The enzyme catalyses [(1-&gt;4)-alpha-D-galacturonosyl methyl ester](n) + n H2O = [(1-&gt;4)-alpha-D-galacturonosyl](n) + n methanol + n H(+). It participates in glycan metabolism; pectin degradation; 2-dehydro-3-deoxy-D-gluconate from pectin: step 1/5. Acts in the modification of cell walls via demethylesterification of cell wall pectin. The sequence is that of Probable pectinesterase/pectinesterase inhibitor 12 (PME12) from Arabidopsis thaliana (Mouse-ear cress).